We begin with the raw amino-acid sequence, 1503 residues long: ATP-binding cassette sub-family C member 6 (1503 aa).

Residues 1–31 (MAAPAEPCAGQGVWNQTEPEPAATSLLSLCF) are Extracellular-facing. Residue asparagine 15 is glycosylated (N-linked (GlcNAc...) asparagine). A helical transmembrane segment spans residues 32 to 52 (LRTAGVWVPPMYLWVLGPIYL). Residues 53–72 (LFIHHHGRGYLRMSPLFKAK) are Cytoplasmic-facing. Residues 73–93 (MVLGFALIVLCTSSVAVALWK) form a helical membrane-spanning segment. At 94 to 98 (IQQGT) the chain is on the extracellular side. The helical transmembrane segment at 99-119 (PEAPEFLIHPTVWLTTMSFAV) threads the bilayer. Residues 120 to 131 (FLIHTERKKGVQ) lie on the Cytoplasmic side of the membrane. Residues 132–149 (SSGVLFGYWLLCFVLPAT) traverse the membrane as a helical segment. The Extracellular segment spans residues 150-167 (NAAQQASGAGFQSDPVRH). Residues 168 to 188 (LSTYLCLSLVVAQFVLSCLAD) traverse the membrane as a helical segment. Residues 189 to 302 (QPPFFPEDPQ…GSQWRPLLKA (114 aa)) lie on the Cytoplasmic side of the membrane. A helical transmembrane segment spans residues 303–323 (IWQVFHSTFLLGTLSLIISDV). The 283-residue stretch at 311-593 (FLLGTLSLII…LPFSIHSLVQ (283 aa)) folds into the ABC transmembrane type-1 1 domain. Over 324–349 (FRFTVPKLLSLFLEFIGDPKPPAWKG) the chain is Extracellular. Residues 350-370 (YLLAVLMFLSACLQTLFEQQN) form a helical membrane-spanning segment. Residues 371-426 (MYRLKVLQMRLRSAITGLVYRKVLALSSGSRKASAVGDVVNLVSVDVQRLTESVLY) are Cytoplasmic-facing. The helical transmembrane segment at 427-447 (LNGLWLPLVWIVVCFVYLWQL) threads the bilayer. The Extracellular portion of the chain corresponds to 448–450 (LGP). Residues 451-471 (SALTAIAVFLSLLPLNFFISK) form a helical membrane-spanning segment. Residues 472–533 (KRNHHQEEQM…ALRTSGLLFS (62 aa)) are Cytoplasmic-facing. Residues 534-554 (VSLVSFQVSTFLVALVVFAVH) form a helical membrane-spanning segment. Residues 555 to 575 (TLVAENAMNAEKAFVTLTVLN) lie on the Extracellular side of the membrane. The helical transmembrane segment at 576 to 596 (ILNKAQAFLPFSIHSLVQARV) threads the bilayer. At 597-939 (SFDRLVTFLC…VKATVHLAYL (343 aa)) the chain is on the cytoplasmic side. One can recognise an ABC transporter 1 domain in the interval 629–853 (ITIHSATFAW…KGALMCLLDQ (225 aa)). 663 to 670 (GPVGAGKS) lines the ATP pocket. The interval 854–919 (ARQPGDRGEG…LDDPDRAGWP (66 aa)) is disordered. Over residues 881-901 (RRPELRRERSIKSVPEKDRTT) the composition is skewed to basic and acidic residues. The chain crosses the membrane as a helical span at residues 940–960 (RAVGTPLCLYALFLFLCQQVA). The ABC transmembrane type-1 2 domain occupies 947 to 1228 (CLYALFLFLC…VVRNWTDLEN (282 aa)). Residues 961-997 (SFCRGYWLSLWADDPAVGGQQTQAALRGGIFGLLGCL) are Extracellular-facing. The helical transmembrane segment at 998 to 1018 (QAIGLFASMAAVLLGGARASR) threads the bilayer. The Cytoplasmic segment spans residues 1019–1061 (LLFQRLLWDVVRSPISFFERTPIGHLLNRFSKETDTVDVDIPD). A helical membrane pass occupies residues 1062-1082 (KLRSLLMYAFGLLEVSLVVAV). Alanine 1083 is a topological domain (extracellular). Residues 1084–1104 (TPLATVAILPLFLLYAGFQSL) traverse the membrane as a helical segment. Residues 1105 to 1175 (YVVSSCQLRR…VADRWLAANV (71 aa)) lie on the Cytoplasmic side of the membrane. A helical transmembrane segment spans residues 1176–1196 (ELLGNGLVFAAATCAVLSKAH). Topologically, residues 1197 to 1198 (LS) are extracellular. A helical transmembrane segment spans residues 1199-1219 (AGLVGFSVSAALQVTQTLQWV). Over 1220–1503 (VRNWTDLENS…YRLAQESGLV (284 aa)) the chain is Cytoplasmic. The ABC transporter 2 domain maps to 1265-1499 (IEFRDFGLRY…KGLFYRLAQE (235 aa)). Serine 1286 carries the post-translational modification Phosphoserine. Position 1299-1306 (1299-1306 (GRTGAGKS)) interacts with ATP.

This sequence belongs to the ABC transporter superfamily. ABCC family. Conjugate transporter (TC 3.A.1.208) subfamily. Mg(2+) serves as cofactor. In terms of processing, glycosylated. In terms of tissue distribution, expressed in kidney and liver. Very low expression in other tissues. In testis, localized to peritubular myoid cells, Leydig cells, along the basal membrane of Sertoli cells and moderately in the adluminal compartment of the seminiferous tubules.

Its subcellular location is the basal cell membrane. The protein resides in the basolateral cell membrane. It localises to the endoplasmic reticulum membrane. The enzyme catalyses an S-substituted glutathione(in) + ATP + H2O = an S-substituted glutathione(out) + ADP + phosphate + H(+). It carries out the reaction leukotriene C4(in) + ATP + H2O = leukotriene C4(out) + ADP + phosphate + H(+). Its activity is regulated as follows. LTC4 transport is completely inhibited by 1 mM orthovanadate. Functionally, ATP-dependent transporter of the ATP-binding cassette (ABC) family that actively extrudes physiological compounds, and xenobiotics from cells. Mediates ATP-dependent transport of glutathione conjugates such as leukotriene-c4 (LTC4) and N-ethylmaleimide S-glutathione (NEM-GS) (in vitro), and an anionic cyclopentapeptide endothelin antagonist, BQ-123. May contribute to regulate the transport of organic compounds in testes across the blood-testis-barrier. Does not appear to actively transport drugs outside the cell. Confers low levels of cellular resistance to etoposide, teniposide, anthracyclines and cisplatin. In terms of biological role, mediates the release of nucleoside triphosphates, predominantly ATP, into the circulation, where it is rapidly converted into AMP and the mineralization inhibitor inorganic pyrophosphate (PPi) by the ecto-enzyme ectonucleotide pyrophosphatase phosphodiesterase 1 (ENPP1), therefore playing a role in PPi homeostasis. Its function is as follows. Inhibits TNF-alpha-mediated apoptosis through blocking one or more caspases. In Homo sapiens (Human), this protein is ATP-binding cassette sub-family C member 6 (ABCC6).